A 654-amino-acid polypeptide reads, in one-letter code: Endoplasmic reticulum chaperone BiP (654 aa).

Residues 1 to 18 (MKLSLVAAMLLLLSAARA) form the signal peptide. The required for interaction with ELAPOR1 stretch occupies residues 1–80 (MKLSLVAAML…EGERLIGDAA (80 aa)). 36–39 (GTTY) is an ATP binding site. Residue serine 86 is modified to Phosphoserine. Lysine 96 is a binding site for ATP. The residue at position 125 (lysine 125) is an N6-acetyllysine. The tract at residues 125–280 (KPYIQVDIGG…KKKTGKDVRK (156 aa)) is nucleotide-binding (NBD). At tyrosine 160 the chain carries 3'-nitrotyrosine. Lysine 213 is modified (N6-acetyllysine). An ATP-binding site is contributed by 227–229 (GGT). Lysine 271 is modified (N6-acetyllysine). Residue 293–300 (EKAKRALS) coordinates ATP. Lysine 326 is subject to N6-acetyllysine. Residue lysine 352 forms a Glycyl lysine isopeptide (Lys-Gly) (interchain with G-Cter in SUMO2) linkage. N6-acetyllysine; alternate is present on lysine 353. Residue lysine 353 forms a Glycyl lysine isopeptide (Lys-Gly) (interchain with G-Cter in SUMO1); alternate linkage. 364–367 (GSTR) contacts ATP. Positions 409–419 (QDTGDLVLLDV) are interdomain linker. Positions 420 to 500 (CPLTLGIETV…PRGVPQIEVT (81 aa)) are substrate-binding (SBD). Lysine 447 carries the post-translational modification N6-succinyllysine. Arginine 492 bears the Omega-N-methylarginine mark. An O-AMP-threonine; alternate modification is found at threonine 518. Threonine 518 carries the phosphothreonine; alternate modification. Lysine 585 carries the post-translational modification N6,N6,N6-trimethyllysine; by METTL21A; in vitro. The residue at position 585 (lysine 585) is an N6,N6-dimethyllysine; alternate. The residue at position 585 (lysine 585) is an N6-methyllysine; alternate. At lysine 591 the chain carries N6-methyllysine. Residues 633–654 (KLYGSAGPPPTGEEDTAEKDEL) form a disordered region. Threonine 643 and threonine 648 each carry phosphothreonine. Residues 644–654 (GEEDTAEKDEL) show a composition bias toward acidic residues. The short motif at 651-654 (KDEL) is the Prevents secretion from ER element.

The protein belongs to the heat shock protein 70 family. Monomer and homooligomer; homooligomerization via the interdomain linker inactivates the chaperone activity and acts as a storage of HSPA5/BiP molecules. Interacts with DNAJC1 (via J domain). Component of an EIF2 complex at least composed of CELF1/CUGBP1, CALR, CALR3, EIF2S1, EIF2S2, HSP90B1 and HSPA5. Part of a large chaperone multiprotein complex comprising DNAJB11, HSP90B1, HSPA5, HYOU, PDIA2, PDIA4, PDIA6, PPIB, SDF2L1, UGGT1 and very small amounts of ERP29, but not, or at very low levels, CALR nor CANX. Interacts with TMEM132A and TRIM21. May form a complex with ERLEC1, OS9, SEL1L and SYVN1. Interacts with DNAJC10. Interacts with DNAJB9/ERdj4; leading to recruit HSPA5/BiP to ERN1/IRE1. Interacts with ERN1/IRE1 (via luminal domain); the interaction takes place following interaction with DNAJB9/ERdj4 and leads to inactivate ERN1/IRE1, the interaction also competitively inhibits ERN1 interaction with MANF. Interacts directly with MANF (via SAP domain); the interaction inhibits ATP binding to HSPA5/BiP and subsequent nucleotide exchange. Interacts with EIF2AK3/PERK (via luminal domain); interaction leads to inactivate EIF2AK3/PERK. Interacts with MX1. Interacts with METTL23. Interacts with CEMIP; the interaction induces calcium leakage from the endoplasmic reticulum and cell migration. Interacts with PCSK4 form; the interaction takes place in the endoplasmic reticulum. Interacts with CIPC. Interacts with CCDC88B (via C-terminus); the interaction opposes ERN1-mediated JNK activation, protecting against apoptosis. Interacts with INPP5K; necessary for INPP5K localization at the endoplasmic reticulum. Interacts with MANF; the interaction is direct. Interacts with LOXL2; leading to activate the ERN1/IRE1-XBP1 pathway of the unfolded protein response. Interacts with CLU under stressed condition; interaction increases CLU protein stability; facilitates its retrotranslocation and redistribution to the mitochondria; cooperatively suppress stress-induced apoptosis by stabilizing mitochondrial membrane integrity. Interacts with CCDC47. Interacts with CLN3. Interacts with ELAPOR1; may regulate the function of HSPA5 in apoptosis and cell proliferation. Interacts with CASP7. Interacts with ILDR2; the interaction stabilizes ILDR2 expression. Interacts with ADAM7. In terms of assembly, (Microbial infection) Interacts with Japanese encephalitis virus envelope protein E. As to quaternary structure, (Microbial infection) Interacts with R.delemar invasin CotH3 on the surface of nasal epithelial cells. Interacts with R.delemar invasin CotH2. (Microbial infection) Interacts with Zika virus envelope protein E and non-structural protein 1 in a chaperone-client manner. Post-translationally, AMPylated by FICD. In unstressed cells, AMPylation at Thr-518 by FICD inactivates the chaperome activity: AMPylated form is locked in a relatively inert state and only weakly stimulated by J domain-containing proteins. In response to endoplasmic reticulum stress, de-AMPylation by the same protein, FICD, restores the chaperone activity.

It localises to the endoplasmic reticulum lumen. It is found in the melanosome. The protein localises to the cytoplasm. Its subcellular location is the cell surface. The catalysed reaction is ATP + H2O = ADP + phosphate + H(+). With respect to regulation, the chaperone activity is regulated by ATP-induced allosteric coupling of the nucleotide-binding (NBD) and substrate-binding (SBD) domains. In the ADP-bound and nucleotide-free (apo) states, the two domains have little interaction. In contrast, in the ATP-bound state the two domains are tightly coupled, which results in drastically accelerated kinetics in both binding and release of polypeptide substrates. J domain-containing co-chaperones (DNAJB9/ERdj4 or DNAJC10/ERdj5) stimulate the ATPase activity and are required for efficient substrate recognition by HSPA5/BiP. Homooligomerization inactivates participating HSPA5/BiP protomers and probably act as reservoirs to store HSPA5/BiP molecules when they are not needed by the cell. Endoplasmic reticulum chaperone that plays a key role in protein folding and quality control in the endoplasmic reticulum lumen. Involved in the correct folding of proteins and degradation of misfolded proteins via its interaction with DNAJC10/ERdj5, probably to facilitate the release of DNAJC10/ERdj5 from its substrate. Acts as a key repressor of the EIF2AK3/PERK and ERN1/IRE1-mediated unfolded protein response (UPR). In the unstressed endoplasmic reticulum, recruited by DNAJB9/ERdj4 to the luminal region of ERN1/IRE1, leading to disrupt the dimerization of ERN1/IRE1, thereby inactivating ERN1/IRE1. Also binds and inactivates EIF2AK3/PERK in unstressed cells. Accumulation of misfolded protein in the endoplasmic reticulum causes release of HSPA5/BiP from ERN1/IRE1 and EIF2AK3/PERK, allowing their homodimerization and subsequent activation. Plays an auxiliary role in post-translational transport of small presecretory proteins across endoplasmic reticulum (ER). May function as an allosteric modulator for SEC61 channel-forming translocon complex, likely cooperating with SEC62 to enable the productive insertion of these precursors into SEC61 channel. Appears to specifically regulate translocation of precursors having inhibitory residues in their mature region that weaken channel gating. May also play a role in apoptosis and cell proliferation. Its function is as follows. (Microbial infection) Plays an important role in viral binding to the host cell membrane and entry for several flaviruses such as Dengue virus, Zika virus and Japanese encephalitis virus. Acts as a component of the cellular receptor for Dengue virus serotype 2/DENV-2 on human liver cells. Functionally, (Microbial infection) Acts as a receptor for CotH proteins expressed by fungi of the order mucorales, the causative agent of mucormycosis, which plays an important role in epithelial cell invasion by the fungi. Acts as a receptor for R.delemar CotH3 in nasal epithelial cells, which may be an early step in rhinoorbital/cerebral mucormycosis (RCM) disease progression. In Homo sapiens (Human), this protein is Endoplasmic reticulum chaperone BiP.